The following is a 472-amino-acid chain: Putative F-box/LRR-repeat protein At5g54820 (472 aa).

In terms of domain architecture, F-box spans 6–54; it reads QDRLSSLPDILLIMIISFLPLKECVRTSVLSKRWRYLCLETTNLSFKES. LRR repeat units follow at residues 58–87, 135–164, 183–208, 225–250, 283–308, and 338–363; these read NPDI…SITQ, NGDI…KIYG, IGWV…SIKN, VIEH…KYSG, SSRI…TVCP, and MHTK…GFDI.

This is Putative F-box/LRR-repeat protein At5g54820 from Arabidopsis thaliana (Mouse-ear cress).